The chain runs to 95 residues: Class I hydrophobin 13 (95 aa).

Disulfide bonds link C14-C74, C21-C68, C22-C55, and C75-C88. N23 and N77 each carry an N-linked (GlcNAc...) asparagine glycan.

The protein belongs to the fungal hydrophobin family. In terms of assembly, self-assembles to form functional amyloid fibrils called rodlets. Self-assembly into fibrillar rodlets occurs spontaneously at hydrophobic:hydrophilic interfaces and the rodlets further associate laterally to form amphipathic monolayers.

It localises to the secreted. Its subcellular location is the cell wall. Functionally, aerial growth, conidiation, and dispersal of filamentous fungi in the environment rely upon a capability of their secreting small amphipathic proteins called hydrophobins (HPBs) with low sequence identity. Class I can self-assemble into an outermost layer of rodlet bundles on aerial cell surfaces, conferring cellular hydrophobicity that supports fungal growth, development and dispersal; whereas Class II form highly ordered films at water-air interfaces through intermolecular interactions but contribute nothing to the rodlet structure. The sequence is that of Class I hydrophobin 13 from Pleurotus ostreatus (strain PC15) (Oyster mushroom).